An 83-amino-acid polypeptide reads, in one-letter code: Cytochrome c oxidase subunit 7A2, mitochondrial (83 aa).

The transit peptide at 1-23 (MLRNLLALRQIGQRTISTASRRH) directs the protein to the mitochondrion. The Mitochondrial matrix portion of the chain corresponds to 24 to 48 (FKNKVPEKQKLFQEDDEIPLYLKGG). Lys33 carries the post-translational modification N6-acetyllysine. A helical transmembrane segment spans residues 49 to 77 (VADALLYRATMILTVGGTAYAIYELAVAS). Residues 78–83 (FPKKQE) are Mitochondrial intermembrane-facing.

Belongs to the cytochrome c oxidase VIIa family. Component of the cytochrome c oxidase (complex IV, CIV), a multisubunit enzyme composed of 14 subunits. The complex is composed of a catalytic core of 3 subunits MT-CO1, MT-CO2 and MT-CO3, encoded in the mitochondrial DNA, and 11 supernumerary subunits COX4I1 (or COX4I2), COX5A, COX5B, COX6A1 (or COX6A2), COX6B1 (or COX6B2), COX6C, COX7A2 (or COX7A1), COX7B, COX7C, COX8A and NDUFA4, which are encoded in the nuclear genome. The complex exists as a monomer or a dimer and forms supercomplexes (SCs) in the inner mitochondrial membrane with NADH-ubiquinone oxidoreductase (complex I, CI) and ubiquinol-cytochrome c oxidoreductase (cytochrome b-c1 complex, complex III, CIII), resulting in different assemblies (supercomplex SCI(1)III(2)IV(1) and megacomplex MCI(2)III(2)IV(2)). Interacts with PET100.

It is found in the mitochondrion inner membrane. The protein operates within energy metabolism; oxidative phosphorylation. Its function is as follows. Component of the cytochrome c oxidase, the last enzyme in the mitochondrial electron transport chain which drives oxidative phosphorylation. The respiratory chain contains 3 multisubunit complexes succinate dehydrogenase (complex II, CII), ubiquinol-cytochrome c oxidoreductase (cytochrome b-c1 complex, complex III, CIII) and cytochrome c oxidase (complex IV, CIV), that cooperate to transfer electrons derived from NADH and succinate to molecular oxygen, creating an electrochemical gradient over the inner membrane that drives transmembrane transport and the ATP synthase. Cytochrome c oxidase is the component of the respiratory chain that catalyzes the reduction of oxygen to water. Electrons originating from reduced cytochrome c in the intermembrane space (IMS) are transferred via the dinuclear copper A center (CU(A)) of subunit 2 and heme A of subunit 1 to the active site in subunit 1, a binuclear center (BNC) formed by heme A3 and copper B (CU(B)). The BNC reduces molecular oxygen to 2 water molecules using 4 electrons from cytochrome c in the IMS and 4 protons from the mitochondrial matrix. This chain is Cytochrome c oxidase subunit 7A2, mitochondrial (COX7A2), found in Homo sapiens (Human).